We begin with the raw amino-acid sequence, 131 residues long: Large ribosomal subunit protein bL12 (131 aa).

The protein belongs to the bacterial ribosomal protein bL12 family. In terms of assembly, homodimer. Part of the ribosomal stalk of the 50S ribosomal subunit. Forms a multimeric L10(L12)X complex, where L10 forms an elongated spine to which 2 to 4 L12 dimers bind in a sequential fashion. Binds GTP-bound translation factors.

Functionally, forms part of the ribosomal stalk which helps the ribosome interact with GTP-bound translation factors. Is thus essential for accurate translation. The polypeptide is Large ribosomal subunit protein bL12 (Prochlorococcus marinus (strain MIT 9301)).